Reading from the N-terminus, the 341-residue chain is uncharacterized protein (341 aa).

This sequence belongs to the cycloisomerase 2 family.

This is an uncharacterized protein from Lactococcus lactis subsp. lactis (strain IL1403) (Streptococcus lactis).